Here is a 261-residue protein sequence, read N- to C-terminus: tRNA (guanine-N(7)-)-methyltransferase (261 aa).

4 residues coordinate S-adenosyl-L-methionine: glutamate 75, glutamate 100, aspartate 127, and aspartate 150. Residue aspartate 150 is part of the active site. Lysine 154 contacts substrate. Positions 156-161 (RHNKRR) are interaction with RNA. Substrate is bound by residues aspartate 186 and 223 to 226 (THFE).

Belongs to the class I-like SAM-binding methyltransferase superfamily. TrmB family.

It catalyses the reaction guanosine(46) in tRNA + S-adenosyl-L-methionine = N(7)-methylguanosine(46) in tRNA + S-adenosyl-L-homocysteine. It functions in the pathway tRNA modification; N(7)-methylguanine-tRNA biosynthesis. Its function is as follows. Catalyzes the formation of N(7)-methylguanine at position 46 (m7G46) in tRNA. This Xanthomonas axonopodis pv. citri (strain 306) protein is tRNA (guanine-N(7)-)-methyltransferase.